The primary structure comprises 269 residues: Shikimate dehydrogenase (NADP(+)) (269 aa).

Shikimate contacts are provided by residues 17–19 (SKS) and threonine 64. The active-site Proton acceptor is the lysine 68. Position 80 (glutamate 80) interacts with NADP(+). The shikimate site is built by asparagine 89 and aspartate 105. Residues 130–134 (GAGGA), 154–159 (NRTRAK), and methionine 213 each bind NADP(+). Tyrosine 215 contacts shikimate. Glycine 237 serves as a coordination point for NADP(+).

It belongs to the shikimate dehydrogenase family. Homodimer.

It catalyses the reaction shikimate + NADP(+) = 3-dehydroshikimate + NADPH + H(+). Its pathway is metabolic intermediate biosynthesis; chorismate biosynthesis; chorismate from D-erythrose 4-phosphate and phosphoenolpyruvate: step 4/7. Its function is as follows. Involved in the biosynthesis of the chorismate, which leads to the biosynthesis of aromatic amino acids. Catalyzes the reversible NADPH linked reduction of 3-dehydroshikimate (DHSA) to yield shikimate (SA). The polypeptide is Shikimate dehydrogenase (NADP(+)) (Neisseria meningitidis serogroup B (strain ATCC BAA-335 / MC58)).